Reading from the N-terminus, the 584-residue chain is MATRFAILPVTALITLTAQAQQAPTPNDQAAAARANAEQNQQAQQRRDAQQRDATVQAPGVRSDVPRPEAYPVLPTETPCFQIDRFALDVPDSLPAASKAQGASALPMDRFAFARDWLAHYAGQCIGKQGVDLIVKGLSQAILARGYITTRVLVPEQDLSTGALKLALIPGVIRHVRFEDEKLLGTWKTAFPTRDGDVLNLRDIEQGLEQMKRVSSQDVSMRIAPGDMPGESDVVLDVKRGKPWTVVASIDNSGTRATGKLQGNVSLGIDNPLGLNDIFNVGFNQDLEFGDKRFGSHGWNAFYSIPWGYWTGTLSAYTSTYFQPLAAVNQTFVASGNMKTVDFRLNRVLTRSRNDVLGAQVRLTRRFGDSYIEGTTIPSSHQNATFLEFGLNDRHYFGSSQFDGSLAYRQGLGWLGSTDSMFAAEGGQTYRFKMVVLDANLSTPFVIGTQPFKYVTTFHGQYTGNTVSYLDSVTIGSRYTVRGFDGETLLAGSRGFYWRNELQVPVAQTGLSAYAGLDYGRVWGPEPVALVGTQLAGAVIGVKGSLMTRFGGYGYDLFAGTPVYKPSGFPTARVTVGFQLTAQF.

An N-terminal signal peptide occupies residues 1-20 (MATRFAILPVTALITLTAQA). The span at 24 to 44 (PTPNDQAAAARANAEQNQQAQ) shows a compositional bias: low complexity. The tract at residues 24–72 (PTPNDQAAAARANAEQNQQAQQRRDAQQRDATVQAPGVRSDVPRPEAYP) is disordered. The 74-residue stretch at 98–171 (SKAQGASALP…GALKLALIPG (74 aa)) folds into the POTRA domain.

It belongs to the TPS (TC 1.B.20) family.

It localises to the cell outer membrane. Potential outer membrane protein component of a toxin-immunity protein module, which functions as a cellular contact-dependent growth inhibition (CDI) system. CDI modules allow bacteria to communicate with and inhibit the growth of closely related neighboring bacteria in a contact-dependent fashion. This protein may be required for secretion and assembly of the CdiA toxin protein. In terms of biological role, expression of this cdiAIB locus in B.thailandensis confers protection against other bacteria carrying the locus; growth inhibition requires cellular contact. Functionally, probable member of a two partner secretion pathway (TPS) in which it mediates the secretion of CdiA2. The chain is Outer membrane transporter CdiB-2 (cdiB2) from Burkholderia pseudomallei (strain 1026b).